The sequence spans 72 residues: Protein kish-A (72 aa).

Residues 1–26 (MSAIFNFQSLLTVILLLICTCAYIRS) form the signal peptide. Topologically, residues 27-53 (LAPSILDRNKTGLLGIFWKCARIGERK) are extracellular. Residue asparagine 35 is glycosylated (N-linked (GlcNAc...) asparagine). Residues 54–71 (SPYVAICCIVMAFSILFI) form a helical membrane-spanning segment. Residue glutamine 72 is a topological domain, cytoplasmic.

Belongs to the KISH family.

Its subcellular location is the golgi apparatus membrane. Involved in the early part of the secretory pathway. This Mus musculus (Mouse) protein is Protein kish-A (Tmem167a).